Consider the following 76-residue polypeptide: Anaredoxin (76 aa).

Residues 24-66 form the HNH domain; it reads CMVCWEVNSKANGHHLIPYSEGGSADIQNMMTLCPSCHTKYHK.

It belongs to the HNH nuclease family.

Its function is as follows. Putative P-450 reductase. The protein is Anaredoxin of Nostoc sp. (strain PCC 7120 / SAG 25.82 / UTEX 2576).